The following is a 179-amino-acid chain: Large ribosomal subunit protein uL5 (179 aa).

Belongs to the universal ribosomal protein uL5 family. Part of the 50S ribosomal subunit; part of the 5S rRNA/L5/L18/L25 subcomplex. Contacts the 5S rRNA and the P site tRNA. Forms a bridge to the 30S subunit in the 70S ribosome.

Functionally, this is one of the proteins that bind and probably mediate the attachment of the 5S RNA into the large ribosomal subunit, where it forms part of the central protuberance. In the 70S ribosome it contacts protein S13 of the 30S subunit (bridge B1b), connecting the 2 subunits; this bridge is implicated in subunit movement. Contacts the P site tRNA; the 5S rRNA and some of its associated proteins might help stabilize positioning of ribosome-bound tRNAs. The polypeptide is Large ribosomal subunit protein uL5 (Prochlorococcus marinus (strain MIT 9215)).